The sequence spans 119 residues: Methylglyoxal synthase (119 aa).

In terms of domain architecture, MGS-like spans 1–119 (MRIALIAHDK…GTADLIIKQF (119 aa)). Substrate-binding positions include histidine 8, lysine 12, 34–37 (TGTT), and 54–55 (SG). Aspartate 60 serves as the catalytic Proton donor/acceptor. Histidine 87 provides a ligand contact to substrate.

The protein belongs to the methylglyoxal synthase family.

It catalyses the reaction dihydroxyacetone phosphate = methylglyoxal + phosphate. Catalyzes the formation of methylglyoxal from dihydroxyacetone phosphate. This chain is Methylglyoxal synthase, found in Clostridium botulinum (strain Eklund 17B / Type B).